We begin with the raw amino-acid sequence, 247 residues long: Protein eak-4 (247 aa).

Residue G2 is the site of N-myristoyl glycine attachment.

Expressed in the 2 embryonic head hypodermal cells XXXL/R.

The protein localises to the cell membrane. Functionally, together with eak-6 and sdf-9, negatively regulates dauer larva formation downstream of the insulin-like receptor daf-2 and in parallel with age-1, pdk-1 and akt-1. The sequence is that of Protein eak-4 from Caenorhabditis elegans.